The primary structure comprises 107 residues: Large ribosomal subunit protein P1 (107 aa).

Residues 67-82 (GPASAAPAGAAGAAAP) show a composition bias toward low complexity. The segment at 67–107 (GPASAAPAGAAGAAAPAEEKAEEKEEEKEESDEDMGFGLFD) is disordered. A compositionally biased stretch (acidic residues) spans 90–101 (KEEEKEESDEDM).

This sequence belongs to the eukaryotic ribosomal protein P1/P2 family. P1 and P2 exist as dimers at the large ribosomal subunit.

It localises to the cytoplasm. Its function is as follows. Plays an important role in the elongation step of protein synthesis. The protein is Large ribosomal subunit protein P1 of Penicillium crustosum (Blue mold fungus).